The sequence spans 98 residues: UPF0473 protein lp_2273 (98 aa).

This sequence belongs to the UPF0473 family.

This Lactiplantibacillus plantarum (strain ATCC BAA-793 / NCIMB 8826 / WCFS1) (Lactobacillus plantarum) protein is UPF0473 protein lp_2273.